The following is a 363-amino-acid chain: 3-dehydroquinate synthase (363 aa).

NAD(+) is bound by residues Gly-107–Asp-111, Thr-131–Thr-132, Lys-144, and Lys-153. 3 residues coordinate Zn(2+): Glu-186, His-251, and His-268.

Belongs to the sugar phosphate cyclases superfamily. Dehydroquinate synthase family. NAD(+) is required as a cofactor. It depends on Co(2+) as a cofactor. The cofactor is Zn(2+).

It localises to the cytoplasm. The catalysed reaction is 7-phospho-2-dehydro-3-deoxy-D-arabino-heptonate = 3-dehydroquinate + phosphate. The protein operates within metabolic intermediate biosynthesis; chorismate biosynthesis; chorismate from D-erythrose 4-phosphate and phosphoenolpyruvate: step 2/7. Catalyzes the conversion of 3-deoxy-D-arabino-heptulosonate 7-phosphate (DAHP) to dehydroquinate (DHQ). This Nostoc sp. (strain PCC 7120 / SAG 25.82 / UTEX 2576) protein is 3-dehydroquinate synthase.